The primary structure comprises 527 residues: Nucleobase-ascorbate transporter LPE1 (527 aa).

Helical transmembrane passes span 43 to 63 (LVML…MGGG), 68 to 88 (AIVI…QVHF), 92 to 112 (LPAV…IILS), 132 to 152 (LQGA…FGIW), 163 to 183 (AAVP…FPGV), 189 to 209 (VGLP…HLFA), 219 to 239 (AVLV…AAGA), 284 to 304 (FAML…LIAV), 361 to 383 (VIKI…AVLA), 387 to 409 (LPIF…FSLL), 427 to 447 (LFLG…FGFG), and 458 to 478 (VMVN…AYLL).

The protein belongs to the nucleobase:cation symporter-2 (NCS2) (TC 2.A.40) family. As to expression, highly expressed in roots.

The protein localises to the membrane. Inhibited by excess of xanthin, uric acid and ascorbic acid, and by 100 um N,N-dicyclohexylcarbodiimide and 30 um carbonyl cyanide m-chlorophenyl-hydrazone. High affinity uric acid-xanthine transporter in A.nidulans. Binds, but cannot transport ascorbic acid. The polypeptide is Nucleobase-ascorbate transporter LPE1 (LPE1) (Zea mays (Maize)).